Reading from the N-terminus, the 160-residue chain is Large ribosomal subunit protein uL13 (160 aa).

The protein belongs to the universal ribosomal protein uL13 family. In terms of assembly, part of the 50S ribosomal subunit.

In terms of biological role, this protein is one of the early assembly proteins of the 50S ribosomal subunit, although it is not seen to bind rRNA by itself. It is important during the early stages of 50S assembly. This is Large ribosomal subunit protein uL13 from Orientia tsutsugamushi (strain Boryong) (Rickettsia tsutsugamushi).